Consider the following 364-residue polypeptide: Histidinol-phosphate aminotransferase (364 aa).

Position 224 is an N6-(pyridoxal phosphate)lysine (lysine 224).

The protein belongs to the class-II pyridoxal-phosphate-dependent aminotransferase family. Histidinol-phosphate aminotransferase subfamily. In terms of assembly, homodimer. Requires pyridoxal 5'-phosphate as cofactor.

The catalysed reaction is L-histidinol phosphate + 2-oxoglutarate = 3-(imidazol-4-yl)-2-oxopropyl phosphate + L-glutamate. It functions in the pathway amino-acid biosynthesis; L-histidine biosynthesis; L-histidine from 5-phospho-alpha-D-ribose 1-diphosphate: step 7/9. In Anaeromyxobacter sp. (strain Fw109-5), this protein is Histidinol-phosphate aminotransferase.